A 269-amino-acid polypeptide reads, in one-letter code: Interleukin-1 beta (269 aa).

The propeptide occupies methionine 1 to aspartate 116.

The protein belongs to the IL-1 family. In terms of assembly, monomer. In its precursor form, weakly interacts with full-length MEFV; the mature cytokine does not interact at all. Interacts with integrins ITGAV:ITGBV and ITGA5:ITGB1; integrin-binding is required for IL1B signaling. Interacts with cargo receptor TMED10; the interaction is direct and is required for the secretion of IL1B mature form. Interacts with HSP90AB1; the interaction facilitates cargo translocation into the ERGIC. Interacts with HSP90B1; the interaction facilitates cargo translocation into the ERGIC.

It is found in the cytoplasm. It localises to the cytosol. The protein resides in the secreted. The protein localises to the lysosome. Its subcellular location is the extracellular exosome. Its function is as follows. Potent pro-inflammatory cytokine. Initially discovered as the major endogenous pyrogen, induces prostaglandin synthesis, neutrophil influx and activation, T-cell activation and cytokine production, B-cell activation and antibody production, and fibroblast proliferation and collagen production. Promotes Th17 differentiation of T-cells. Synergizes with IL12/interleukin-12 to induce IFNG synthesis from T-helper 1 (Th1) cells. Plays a role in angiogenesis by inducing VEGF production synergistically with TNF and IL6. Involved in transduction of inflammation downstream of pyroptosis: its mature form is specifically released in the extracellular milieu by passing through the gasdermin-D (GSDMD) pore. The protein is Interleukin-1 beta (IL1B) of Macaca mulatta (Rhesus macaque).